The chain runs to 154 residues: MTLGLINANPVVQAKKEGLVRREDQYRDDGVDPLEIYDYVRDIRDPEHPYTLEQLRVVSEESVTVDDKLDRILITFTPTIQHCSMANIIGLCLRAKLKECLQLHYKVDIRVSPGSHADEVSVNKQLNDKERVVAALENPNLRQLVDECIYSDEI.

This sequence belongs to the MIP18 family.

May play a role in chromosome segregation through establishment of sister chromatid cohesion. Unable to complement ae7 mutants, and thus probably not involved in the cytosolic iron-sulfur assembly (CIA) pathway. The protein is Protein AE7-like 1 of Arabidopsis thaliana (Mouse-ear cress).